Reading from the N-terminus, the 104-residue chain is L-rhamnose mutarotase (104 aa).

Residue Tyr18 coordinates substrate. His22 serves as the catalytic Proton donor. Substrate contacts are provided by residues Tyr41 and 76–77; that span reads WW.

The protein belongs to the rhamnose mutarotase family. Homodimer.

The protein resides in the cytoplasm. It carries out the reaction alpha-L-rhamnose = beta-L-rhamnose. Its pathway is carbohydrate metabolism; L-rhamnose metabolism. Functionally, involved in the anomeric conversion of L-rhamnose. This chain is L-rhamnose mutarotase, found in Shigella dysenteriae serotype 1 (strain Sd197).